Reading from the N-terminus, the 297-residue chain is HTH-type transcriptional regulator ArgP (297 aa).

Residues Pro4 to Thr60 form the HTH lysR-type domain. A DNA-binding region (H-T-H motif) is located at residues Phe21 to Lys40.

It belongs to the LysR transcriptional regulatory family. As to quaternary structure, homodimer.

Its function is as follows. Controls the transcription of genes involved in arginine and lysine metabolism. This Salmonella dublin (strain CT_02021853) protein is HTH-type transcriptional regulator ArgP.